An 88-amino-acid polypeptide reads, in one-letter code: Defensin-like protein 98 (88 aa).

The N-terminal stretch at 1–29 is a signal peptide; sequence MGSLRVSTVVIAVVACLSILLISPTEVDG. 4 cysteine pairs are disulfide-bonded: cysteine 33–cysteine 76, cysteine 40–cysteine 62, cysteine 46–cysteine 73, and cysteine 50–cysteine 75.

The protein belongs to the DEFL family.

The protein resides in the secreted. The polypeptide is Defensin-like protein 98 (Arabidopsis thaliana (Mouse-ear cress)).